Here is a 449-residue protein sequence, read N- to C-terminus: MDSLEIEVIPRPDKDDRYTIKPLKDTLSFDKGFFLAVRAIQSIRKKSQGSVIVVGIAGPSGAGKTSIAQKIVSVLPKSILISLDNYLDSSRQIIEENYDDYRLVDFELLKKNISDLISNKPTDLPLYDFTKSGRYAYKRVQPPESKVLLIEGIYALHEEIRHLLDLRVSISGGVHFDLIKRIFRDVHRTGQQPHESLQQITDTVYPMYKAFIEPDLQLAEIQVVNKFNPFGGLLNPIYILKSVKQGVTVDMIHSVLNKSTIQENTARYYDIYLIPPNTTFANSSSCDWIRVRNADGQYSIMFSEEIKEGPFIISPRVDFVVGVNMLGGLMSLGYQMVAIIHRKSTIFKDGKIIISYDELEELGQTFVQIKGFDATSVQEAGKKLGLENNYLQKSYIELYQDKYKKSLSDNSTVTTLPIGGINNNNTINNNNNNNNNNNLSLSNFINSKL.

58-65 provides a ligand contact to ATP; the sequence is GPSGAGKT. The CYTH domain occupies 235–401; sequence NPIYILKSVK…QKSYIELYQD (167 aa).

This sequence belongs to the uridine kinase family.

The enzyme catalyses uridine + ATP = UMP + ADP + H(+). The catalysed reaction is cytidine + ATP = CMP + ADP + H(+). Its pathway is pyrimidine metabolism; CTP biosynthesis via salvage pathway; CTP from cytidine: step 1/3. The protein operates within pyrimidine metabolism; UMP biosynthesis via salvage pathway; UMP from uridine: step 1/1. In terms of biological role, catalyzes the conversion of uridine into uridine monophosphate and cytidine into cytidine monophosphate in the pyrimidine salvage pathway. The sequence is that of Uridine-cytidine kinase C (udkC) from Dictyostelium discoideum (Social amoeba).